We begin with the raw amino-acid sequence, 370 residues long: Small ribosomal subunit biogenesis GTPase RsgA (370 aa).

In terms of domain architecture, CP-type G spans 97-255 (QTQLDRPPIA…LADTPGFNQP (159 aa)). Residues 146–149 (NKSD) and 197–205 (GPSGVGKSS) each bind GTP. Zn(2+) is bound by residues C280, C285, H287, and C293. The disordered stretch occupies residues 328–370 (TLKLKTKGKGQSQYEPKLESKKYRRTSRRTQVQGLQDLYQEEE).

This sequence belongs to the TRAFAC class YlqF/YawG GTPase family. RsgA subfamily. Monomer. Associates with 30S ribosomal subunit, binds 16S rRNA. It depends on Zn(2+) as a cofactor.

It is found in the cytoplasm. In terms of biological role, one of several proteins that assist in the late maturation steps of the functional core of the 30S ribosomal subunit. Helps release RbfA from mature subunits. May play a role in the assembly of ribosomal proteins into the subunit. Circularly permuted GTPase that catalyzes slow GTP hydrolysis, GTPase activity is stimulated by the 30S ribosomal subunit. The sequence is that of Small ribosomal subunit biogenesis GTPase RsgA from Trichormus variabilis (strain ATCC 29413 / PCC 7937) (Anabaena variabilis).